The primary structure comprises 284 residues: Sulfotransferase 4A1 (284 aa).

Phosphothreonine occurs at positions 8, 11, and 205.

It belongs to the sulfotransferase 1 family. Expressed in brain, cerebellum and hypothalamus. Not detected in pancreas, liver, lung, intestine, kidney, uterus, adrenal gland, thymus, spleen, epididymis, testicle, and heart.

It localises to the cytoplasm. Its function is as follows. Atypical sulfotransferase family member with very low affinity for 3'-phospho-5'-adenylyl sulfate (PAPS) and very low catalytic activity towards L-triiodothyronine, thyroxine, estrone, p-nitrophenol, 2-naphthylamine, and 2-beta-naphthol. May have a role in the metabolism of drugs and neurotransmitters in the CNS. This is Sulfotransferase 4A1 (Sult4a1) from Mus musculus (Mouse).